We begin with the raw amino-acid sequence, 226 residues long: Transmembrane protein 204 (226 aa).

Topologically, residues 1–5 are cytoplasmic; sequence MTVRK. The helical transmembrane segment at 6-26 threads the bilayer; sequence VVATAVLVALVSLVLNNAAAF. Residues 27–103 are Extracellular-facing; sequence TPNWVYQTLE…LQFDMMRACN (77 aa). Residues 104–124 traverse the membrane as a helical segment; the sequence is LVATAALAAGQLTFVLGLTGL. Topologically, residues 125–136 are cytoplasmic; that stretch reads PLLSPDAQCWEE. The chain crosses the membrane as a helical span at residues 137 to 157; it reads AMAAAFQLASFVLVIGLVTFY. Residues 158–170 lie on the Extracellular side of the membrane; the sequence is RIGPYTSLSWSCY. Residues 171-191 traverse the membrane as a helical segment; it reads LNIGACLLATLAAAMLIWNVL. Topologically, residues 192–226 are cytoplasmic; that stretch reads HRREDCTAPRVIVISRSLTARFRRGLDNDYVESPC.

The protein resides in the cell junction. The protein localises to the adherens junction. Its subcellular location is the cell membrane. Can influence paracellular permeability. Appears to be involved in cell-cell interactions through adherens. This chain is Transmembrane protein 204 (TMEM204), found in Bos taurus (Bovine).